Here is a 115-residue protein sequence, read N- to C-terminus: Large ribosomal subunit protein bL19 (115 aa).

It belongs to the bacterial ribosomal protein bL19 family.

In terms of biological role, this protein is located at the 30S-50S ribosomal subunit interface and may play a role in the structure and function of the aminoacyl-tRNA binding site. This is Large ribosomal subunit protein bL19 from Streptococcus thermophilus (strain CNRZ 1066).